A 495-amino-acid chain; its full sequence is DDB1- and CUL4-associated factor 4 (495 aa).

Residues 1–17 are compositionally biased toward basic residues; sequence MNKSRWQSRRRHGRRSH. The segment at 1-66 is disordered; sequence MNKSRWQSRR…TAGTSSVPEL (66 aa). Residues 24-34 are compositionally biased toward basic and acidic residues; that stretch reads RLRDSEDRSDS. A compositionally biased stretch (low complexity) spans 51 to 62; it reads PSTSSGTAGTSS. 2 WD repeats span residues 368–407 and 410–451; these read FHDS…CVRQ and GHVN…LLRT.

Interacts with DDB1 and CUL4A.

Its pathway is protein modification; protein ubiquitination. In terms of biological role, may function as a substrate receptor for CUL4-DDB1 E3 ubiquitin-protein ligase complex. This chain is DDB1- and CUL4-associated factor 4 (DCAF4), found in Homo sapiens (Human).